Here is a 267-residue protein sequence, read N- to C-terminus: 2-keto-3-deoxy-L-rhamnonate aldolase (267 aa).

H49 serves as the catalytic Proton acceptor. Q151 lines the substrate pocket. Residue E153 coordinates Mg(2+). Residues A178 and D179 each contribute to the substrate site. D179 serves as a coordination point for Mg(2+).

It belongs to the HpcH/HpaI aldolase family. KDR aldolase subfamily. In terms of assembly, homohexamer. It depends on Mg(2+) as a cofactor. The cofactor is Ni(2+).

The catalysed reaction is 2-dehydro-3-deoxy-L-rhamnonate = (S)-lactaldehyde + pyruvate. It carries out the reaction D-glyceraldehyde + 3-hydroxypyruvate = (3R,4S,5R)-3,4,5,6-tetrahydroxy-2-oxohexanoate. It catalyses the reaction D-glyceraldehyde + 3-hydroxypyruvate = 2-dehydro-D-gluconate. The enzyme catalyses D-glyceraldehyde + 3-hydroxypyruvate = 2-dehydro-D-galactonate. The catalysed reaction is D-glyceraldehyde + pyruvate = 2-dehydro-3-deoxy-L-galactonate. It carries out the reaction 2-dehydro-3-deoxy-D-gluconate = D-glyceraldehyde + pyruvate. In terms of biological role, catalyzes the reversible retro-aldol cleavage of 2-keto-3-deoxy-L-rhamnonate (KDR) to pyruvate and lactaldehyde. 2-keto-3-deoxy-L-mannonate, 2-keto-3-deoxy-L-lyxonate and 4-hydroxy-2-ketoheptane-1,7-dioate (HKHD) are also reasonably good substrates, although 2-keto-3-deoxy-L-rhamnonate is likely to be the physiological substrate. In vitro, can catalyze the aldolisation reaction between hydroxypyruvate (HPA) or pyruvate (PA) and D-glyceraldehyde (D-GA). The condensation of hydroxypyruvate and D-glyceraldehyde produces (3R,4S,5R)-3,4,5,6-tetrahydroxy-2-oxohexanoate as the major product, 2-dehydro-D-gluconate and 2-dehydro-D-galactonate. The condensation of pyruvate and D-glyceraldehyde produces 2-dehydro-3-deoxy-L-galactonate as the major product and 2-dehydro-3-deoxy-D-gluconate. This is 2-keto-3-deoxy-L-rhamnonate aldolase (rhmA) from Escherichia coli (strain K12).